Consider the following 374-residue polypeptide: RNA polymerase sigma factor SigA (374 aa).

The tract at residues 141–211 (LAEANLRLVV…TRAIADQART (71 aa)) is sigma-70 factor domain-2. The short motif at 165-168 (DLIQ) is the Interaction with polymerase core subunit RpoC element. Positions 220 to 296 (ETINKLIRVQ…DQDATSPSDH (77 aa)) are sigma-70 factor domain-3. Residues 309–362 (VLDTLTDREENVLRLRFGLDDGRTRTLEEVGRVFGVTRERIRQIEAKALRKLRH) are sigma-70 factor domain-4. Residues 335 to 354 (LEEVGRVFGVTRERIRQIEA) constitute a DNA-binding region (H-T-H motif).

This sequence belongs to the sigma-70 factor family. RpoD/SigA subfamily. In terms of assembly, interacts transiently with the RNA polymerase catalytic core.

It is found in the cytoplasm. Functionally, sigma factors are initiation factors that promote the attachment of RNA polymerase to specific initiation sites and are then released. This sigma factor is the primary sigma factor during exponential growth. This is RNA polymerase sigma factor SigA from Listeria innocua serovar 6a (strain ATCC BAA-680 / CLIP 11262).